We begin with the raw amino-acid sequence, 408 residues long: CinA-like protein (408 aa).

The protein belongs to the CinA family.

This is CinA-like protein from Anaeromyxobacter dehalogenans (strain 2CP-C).